A 501-amino-acid polypeptide reads, in one-letter code: L-arabinose isomerase (501 aa).

Residues Glu306, Glu333, His350, and His450 each contribute to the Mn(2+) site.

The protein belongs to the arabinose isomerase family. In terms of assembly, homohexamer. Mn(2+) is required as a cofactor.

The catalysed reaction is beta-L-arabinopyranose = L-ribulose. It functions in the pathway carbohydrate degradation; L-arabinose degradation via L-ribulose; D-xylulose 5-phosphate from L-arabinose (bacterial route): step 1/3. Functionally, catalyzes the conversion of L-arabinose to L-ribulose. The sequence is that of L-arabinose isomerase from Pectobacterium carotovorum subsp. carotovorum (strain PC1).